Here is a 35-residue protein sequence, read N- to C-terminus: MSDIN-like toxin proprotein 8 (35 aa).

A propeptide spanning residues 1 to 10 is cleaved from the precursor; it reads MSDINATRLP. The cyclopeptide (Phe-Pro) cross-link spans 11-18; the sequence is FVFVASPP. Residues 19–35 constitute a propeptide that is removed on maturation; it reads CVGDDIAMVLTRGENLC.

The protein belongs to the MSDIN fungal toxin family. Post-translationally, processed by the macrocyclase-peptidase enzyme POPB to yield a toxic cyclic octapeptide. POPB first removes 10 residues from the N-terminus. Conformational trapping of the remaining peptide forces the enzyme to release this intermediate rather than proceed to macrocyclization. The enzyme rebinds the remaining peptide in a different conformation and catalyzes macrocyclization of the N-terminal 8 residues. As to expression, expressed in basidiocarps.

Probable toxin that belongs to the MSDIN-like toxin family responsible for a large number of food poisoning cases and deaths. This is MSDIN-like toxin proprotein 8 from Amanita exitialis (Guangzhou destroying angel).